Here is a 481-residue protein sequence, read N- to C-terminus: Argininosuccinate lyase (481 aa).

The protein belongs to the lyase 1 family. Argininosuccinate lyase subfamily.

It is found in the cytoplasm. The catalysed reaction is 2-(N(omega)-L-arginino)succinate = fumarate + L-arginine. Its pathway is amino-acid biosynthesis; L-arginine biosynthesis; L-arginine from L-ornithine and carbamoyl phosphate: step 3/3. This is Argininosuccinate lyase from Kineococcus radiotolerans (strain ATCC BAA-149 / DSM 14245 / SRS30216).